The sequence spans 337 residues: Large ribosomal subunit protein uL3 (337 aa).

The protein belongs to the universal ribosomal protein uL3 family. In terms of assembly, part of the 50S ribosomal subunit. Forms a cluster with proteins L14 and L24e.

Functionally, one of the primary rRNA binding proteins, it binds directly near the 3'-end of the 23S rRNA, where it nucleates assembly of the 50S subunit. This Methanosphaerula palustris (strain ATCC BAA-1556 / DSM 19958 / E1-9c) protein is Large ribosomal subunit protein uL3.